Reading from the N-terminus, the 139-residue chain is Large ribosomal subunit protein bL17 (139 aa).

Belongs to the bacterial ribosomal protein bL17 family. In terms of assembly, part of the 50S ribosomal subunit. Contacts protein L32.

This is Large ribosomal subunit protein bL17 from Azorhizobium caulinodans (strain ATCC 43989 / DSM 5975 / JCM 20966 / LMG 6465 / NBRC 14845 / NCIMB 13405 / ORS 571).